Here is a 752-residue protein sequence, read N- to C-terminus: Granule-bound starch synthase 2, chloroplastic/amyloplastic (752 aa).

The transit peptide at 1-57 directs the protein to the chloroplast; it reads MMLSLGSDATVLPFHAKNLKFTPKLSTLNGDLAFSKGLGVGRLNCGSVRLNHKQHVR. 2 disordered regions span residues 116-146 and 224-253; these read LEGN…SGSA and FENF…EKPP. Lys275 is an ADP-alpha-D-glucose binding site.

Belongs to the glycosyltransferase 1 family. Bacterial/plant glycogen synthase subfamily. In terms of tissue distribution, widely expressed.

The protein localises to the plastid. The protein resides in the chloroplast. Its subcellular location is the amyloplast. It catalyses the reaction [(1-&gt;4)-alpha-D-glucosyl](n) + ADP-alpha-D-glucose = [(1-&gt;4)-alpha-D-glucosyl](n+1) + ADP + H(+). Its pathway is glycan biosynthesis; starch biosynthesis. This is Granule-bound starch synthase 2, chloroplastic/amyloplastic from Pisum sativum (Garden pea).